The sequence spans 1399 residues: DNA-directed RNA polymerase subunit beta' (1399 aa).

Positions 70, 72, 85, and 88 each coordinate Zn(2+). Mg(2+) contacts are provided by Asp-460, Asp-462, and Asp-464. Zn(2+) contacts are provided by Cys-814, Cys-888, Cys-895, and Cys-898. Residues 1367 to 1399 (SERKRQRDLGKPQRVSASEAEAALTEALNSSGN) form a disordered region. Over residues 1382-1399 (SASEAEAALTEALNSSGN) the composition is skewed to low complexity.

The protein belongs to the RNA polymerase beta' chain family. The RNAP catalytic core consists of 2 alpha, 1 beta, 1 beta' and 1 omega subunit. When a sigma factor is associated with the core the holoenzyme is formed, which can initiate transcription. Requires Mg(2+) as cofactor. It depends on Zn(2+) as a cofactor.

The enzyme catalyses RNA(n) + a ribonucleoside 5'-triphosphate = RNA(n+1) + diphosphate. Its function is as follows. DNA-dependent RNA polymerase catalyzes the transcription of DNA into RNA using the four ribonucleoside triphosphates as substrates. The polypeptide is DNA-directed RNA polymerase subunit beta' (Pseudomonas aeruginosa (strain UCBPP-PA14)).